Consider the following 225-residue polypeptide: Ribose-5-phosphate isomerase A (225 aa).

Substrate is bound by residues 26-29, 82-85, and 95-98; these read TGST, DGAD, and KGGG. The active-site Proton acceptor is the glutamate 104. Lysine 122 contacts substrate.

The protein belongs to the ribose 5-phosphate isomerase family. In terms of assembly, homodimer.

It catalyses the reaction aldehydo-D-ribose 5-phosphate = D-ribulose 5-phosphate. Its pathway is carbohydrate degradation; pentose phosphate pathway; D-ribose 5-phosphate from D-ribulose 5-phosphate (non-oxidative stage): step 1/1. Its function is as follows. Catalyzes the reversible conversion of ribose-5-phosphate to ribulose 5-phosphate. The polypeptide is Ribose-5-phosphate isomerase A (Streptococcus gordonii (strain Challis / ATCC 35105 / BCRC 15272 / CH1 / DL1 / V288)).